Here is a 1002-residue protein sequence, read N- to C-terminus: MSEKPQKSQKSEVKDYSKTLFLPQTEFPMRAGLPQREPEILKYWNDIGLYDRLRQEAEGRTKFVLHDGPPYANGNIHIGHALNKILKDVVTKSQQMLGFDSNYVPGWDCHGLPIEWKIEEENYRKKGKQKPDFRDSAAMVAFRKECRAYATHWINVQREEFKRLGIIGDWDHPYQTMSYPAEAQIARELMKFAANGTLYRGSKPVMWSVVEKTALAEAEVEYEDYTSDMVWVKFPVTSPAHGALASASVVIWTTTPWTLPGNRAISFSPKIAYGLYKVTDAPADNWAKTGDLLILADALAAEVFKQARVTTYEKVRELPADTLDAVECAHPLKGFSGGYEFTVPLLPGDHVTDDTGTGFVHTAPGHGREDFDVWMANARELEARGINTTIPYTVDENGAFTDHAPGFVGKRVINDKGEKGDANEAVIKALIDAGKLLARGRLKHQYPHSWRSKKPVIFRNTPQWFIAMDKDISANGHAKKGDTLRARALHAISVTQWVPPSGENRINGMIANRPDWVISRQRAWGVPIAVFVREKSDGSAEILQDEIVNQRIAEAFMEEGADAWYMDGARERFLGSRASEDWKKVDDICDVWFDSGSTHAFVLEDRQNFPQLGNIVRKVDGGSDTVMYLEGSDQHRGWFHSSLLESAGTRGRAPYDIVLTHGFTLDENGRKMSKSLGNTVEPQKVIKDSGADILRLWVCATDYADDQRIGPEILKNTIETYRKLRNSIRWMLGTLHHFKPSEKVAYAEMPELERLMLHELAGHAETVRNAYAAFDYKTVVASLAAFMNSELSAFYFDIRKDTLYCDPPSSPARKAALTTIDLLCDAILKWLAPILSFTTDEAWRMFRPNAEPSVHLTLFPADIEKLRDDKLAAKWETIRNVRRAVTGALELERAAKNIGSSLEASPVIYVADRDMLATLFDTDLAEVCITSNYEVRESEAPASAFRLDAVPGVAVVVEKAVGTKCARSWKISQTVGEDPEYPDVTPRDAQALREWKALGVGV.

The short motif at 70–80 (PYANGNIHIGH) is the 'HIGH' region element. Glu-630 serves as a coordination point for L-isoleucyl-5'-AMP. The 'KMSKS' region motif lies at 671 to 675 (KMSKS). Lys-674 is an ATP binding site.

The protein belongs to the class-I aminoacyl-tRNA synthetase family. IleS type 1 subfamily. In terms of assembly, monomer.

The protein resides in the cytoplasm. It catalyses the reaction tRNA(Ile) + L-isoleucine + ATP = L-isoleucyl-tRNA(Ile) + AMP + diphosphate. In terms of biological role, catalyzes the attachment of isoleucine to tRNA(Ile). As IleRS can inadvertently accommodate and process structurally similar amino acids such as valine, to avoid such errors it has two additional distinct tRNA(Ile)-dependent editing activities. One activity is designated as 'pretransfer' editing and involves the hydrolysis of activated Val-AMP. The other activity is designated 'posttransfer' editing and involves deacylation of mischarged Val-tRNA(Ile). The polypeptide is Isoleucine--tRNA ligase (Bradyrhizobium diazoefficiens (strain JCM 10833 / BCRC 13528 / IAM 13628 / NBRC 14792 / USDA 110)).